The following is a 93-amino-acid chain: UPF0297 protein PEPE_1262 (93 aa).

Belongs to the UPF0297 family.

The protein is UPF0297 protein PEPE_1262 of Pediococcus pentosaceus (strain ATCC 25745 / CCUG 21536 / LMG 10740 / 183-1w).